The chain runs to 1074 residues: Phospholipase D1 (1074 aa).

In terms of domain architecture, PX spans 81-212 (IKAQVLEVER…TEFLDISQLS (132 aa)). The region spanning 219–328 (PKGIEGMIMK…WGGAIEEFIQ (110 aa)) is the PH domain. S-palmitoyl cysteine attachment occurs at residues cysteine 240 and cysteine 241. Residues 459–486 (YLWAHHEKLVIIDQSVAFVGGIDLAYGR) enclose the PLD phosphodiesterase 1 domain. The interval 463 to 928 (HHEKLVIIDQ…MLGKRDSEMA (466 aa)) is catalytic. Phosphoserine occurs at positions 499, 561, and 629. The region spanning 891–918 (ELIYVHSKLLIADDNTVIIGSANINDRS) is the PLD phosphodiesterase 2 domain.

The protein belongs to the phospholipase D family. Interacts with PIP5K1B. In terms of tissue distribution, expressed abundantly in the pancreas and heart and at high levels in brain, placenta, spleen, uterus and small intestine.

The protein localises to the cytoplasm. The protein resides in the perinuclear region. Its subcellular location is the endoplasmic reticulum membrane. It localises to the golgi apparatus membrane. It is found in the late endosome membrane. It carries out the reaction a 1,2-diacyl-sn-glycero-3-phosphocholine + H2O = a 1,2-diacyl-sn-glycero-3-phosphate + choline + H(+). The catalysed reaction is ethanol + a 1,2-diacyl-sn-glycero-3-phosphocholine = 1,2-diacyl-sn-glycero-3-phosphoethanol + choline. It catalyses the reaction 1,2-dihexadecanoyl-sn-glycero-3-phosphocholine + H2O = 1,2-dihexadecanoyl-sn-glycero-3-phosphate + choline + H(+). With respect to regulation, stimulated by phosphatidylinositol 4,5-bisphosphate and phosphatidylinositol 3,4,5-trisphosphate, activated by the phosphokinase C-alpha, by the ADP-ribosylation factor-1 (ARF-1), and to a lesser extent by GTP-binding proteins: RHO A, RAC-1 and CDC42. Inhibited by oleate. Function as phospholipase selective for phosphatidylcholine. Implicated as a critical step in numerous cellular pathways, including signal transduction, membrane trafficking, and the regulation of mitosis. May be involved in the regulation of perinuclear intravesicular membrane traffic. The chain is Phospholipase D1 from Homo sapiens (Human).